The chain runs to 130 residues: Small ribosomal subunit protein uS8 (130 aa).

It belongs to the universal ribosomal protein uS8 family. As to quaternary structure, part of the 30S ribosomal subunit. Contacts proteins S5 and S12.

One of the primary rRNA binding proteins, it binds directly to 16S rRNA central domain where it helps coordinate assembly of the platform of the 30S subunit. This Shewanella halifaxensis (strain HAW-EB4) protein is Small ribosomal subunit protein uS8.